Here is a 132-residue protein sequence, read N- to C-terminus: Phosphoribosyl-AMP cyclohydrolase (132 aa).

Aspartate 82 is a binding site for Mg(2+). Cysteine 83 serves as a coordination point for Zn(2+). The Mg(2+) site is built by aspartate 84 and aspartate 86. Cysteine 100 and cysteine 107 together coordinate Zn(2+).

It belongs to the PRA-CH family. As to quaternary structure, homodimer. Requires Mg(2+) as cofactor. Zn(2+) is required as a cofactor.

The protein resides in the cytoplasm. The catalysed reaction is 1-(5-phospho-beta-D-ribosyl)-5'-AMP + H2O = 1-(5-phospho-beta-D-ribosyl)-5-[(5-phospho-beta-D-ribosylamino)methylideneamino]imidazole-4-carboxamide. The protein operates within amino-acid biosynthesis; L-histidine biosynthesis; L-histidine from 5-phospho-alpha-D-ribose 1-diphosphate: step 3/9. Its function is as follows. Catalyzes the hydrolysis of the adenine ring of phosphoribosyl-AMP. The chain is Phosphoribosyl-AMP cyclohydrolase from Dechloromonas aromatica (strain RCB).